Here is a 388-residue protein sequence, read N- to C-terminus: Succinate--CoA ligase [ADP-forming] subunit beta (388 aa).

Residues K9–Q244 enclose the ATP-grasp domain. Residues K46, G53 to G55, E99, T102, and E107 each bind ATP. Positions 199 and 213 each coordinate Mg(2+). Residues N264 and G321–V323 contribute to the substrate site.

The protein belongs to the succinate/malate CoA ligase beta subunit family. As to quaternary structure, heterotetramer of two alpha and two beta subunits. The cofactor is Mg(2+).

The catalysed reaction is succinate + ATP + CoA = succinyl-CoA + ADP + phosphate. The enzyme catalyses GTP + succinate + CoA = succinyl-CoA + GDP + phosphate. It participates in carbohydrate metabolism; tricarboxylic acid cycle; succinate from succinyl-CoA (ligase route): step 1/1. In terms of biological role, succinyl-CoA synthetase functions in the citric acid cycle (TCA), coupling the hydrolysis of succinyl-CoA to the synthesis of either ATP or GTP and thus represents the only step of substrate-level phosphorylation in the TCA. The beta subunit provides nucleotide specificity of the enzyme and binds the substrate succinate, while the binding sites for coenzyme A and phosphate are found in the alpha subunit. The protein is Succinate--CoA ligase [ADP-forming] subunit beta of Shigella boydii serotype 18 (strain CDC 3083-94 / BS512).